A 357-amino-acid chain; its full sequence is Dihydroorotate dehydrogenase (quinone) (357 aa).

FMN is bound by residues 67–71 and Thr91; that span reads AGFDK. Position 71 (Lys71) interacts with substrate. Position 116–120 (116–120) interacts with substrate; sequence NRMGF. Residues Asn153 and Asn186 each coordinate FMN. Asn186 provides a ligand contact to substrate. Ser189 acts as the Nucleophile in catalysis. Asn191 is a substrate binding site. FMN-binding residues include Lys228 and Thr256. A substrate-binding site is contributed by 257 to 258; that stretch reads NT. FMN contacts are provided by residues Gly282, Gly311, and 332–333; that span reads YT.

Belongs to the dihydroorotate dehydrogenase family. Type 2 subfamily. In terms of assembly, monomer. It depends on FMN as a cofactor.

The protein localises to the cell membrane. It carries out the reaction (S)-dihydroorotate + a quinone = orotate + a quinol. It participates in pyrimidine metabolism; UMP biosynthesis via de novo pathway; orotate from (S)-dihydroorotate (quinone route): step 1/1. Its function is as follows. Catalyzes the conversion of dihydroorotate to orotate with quinone as electron acceptor. This Arthrobacter sp. (strain FB24) protein is Dihydroorotate dehydrogenase (quinone).